Consider the following 74-residue polypeptide: MIGMNFKDPIEELLDNYFNAKKEYEKNPIEKNLNRLKKAEAKLMINYPNTNATYIYKNKKYKIIIKDSVSVIPI.

This is an uncharacterized protein from Methanocaldococcus jannaschii (strain ATCC 43067 / DSM 2661 / JAL-1 / JCM 10045 / NBRC 100440) (Methanococcus jannaschii).